The chain runs to 212 residues: N-(5'-phosphoribosyl)anthranilate isomerase (212 aa).

This sequence belongs to the TrpF family.

The enzyme catalyses N-(5-phospho-beta-D-ribosyl)anthranilate = 1-(2-carboxyphenylamino)-1-deoxy-D-ribulose 5-phosphate. Its pathway is amino-acid biosynthesis; L-tryptophan biosynthesis; L-tryptophan from chorismate: step 3/5. The sequence is that of N-(5'-phosphoribosyl)anthranilate isomerase from Cereibacter sphaeroides (strain ATCC 17029 / ATH 2.4.9) (Rhodobacter sphaeroides).